The primary structure comprises 352 residues: Zona pellucida-binding protein 2 (352 aa).

The N-terminal stretch at 1-28 (MAGGGGRPCSPQRALLGMVAIMAVVAEA) is a signal peptide. Asn110 and Asn309 each carry an N-linked (GlcNAc...) asparagine glycan.

Belongs to the zona pellucida-binding protein Sp38 family.

The protein localises to the secreted. The protein resides in the cytoplasmic vesicle. It localises to the secretory vesicle. It is found in the acrosome. Functionally, may be implicated in the gamete interaction during fertilization. The polypeptide is Zona pellucida-binding protein 2 (ZPBP2) (Gallus gallus (Chicken)).